A 1029-amino-acid chain; its full sequence is Endosome/lysosome-associated apoptosis and autophagy regulator family member 2 (1029 aa).

Residues 1–47 form the signal peptide; it reads MLFRARGPVRGRGWGRPAEAPRRGRSPPWSPAWICCWALAGCQAAWA. Residues 48-929 lie on the Extracellular side of the membrane; the sequence is GDLPSSSSRP…TCETVDFWLK (882 aa). Asn169 is a glycosylation site (N-linked (GlcNAc...) asparagine). 3 disulfides stabilise this stretch: Cys293–Cys310, Cys323–Cys346, and Cys326–Cys358. N-linked (GlcNAc...) asparagine glycans are attached at residues Asn405 and Asn691. Positions 672–877 constitute an MRH domain; that stretch reads SDCFFYHEKE…LWESAEACPL (206 aa). Cystine bridges form between Cys674–Cys720, Cys730–Cys758, Cys827–Cys863, and Cys839–Cys875. A helical transmembrane segment spans residues 930 to 950; sequence VGAGVGAFTAVLLVALTCYFW. The Cytoplasmic portion of the chain corresponds to 951-1029; sequence KKNQKLEYKY…QLKTSRSPNI (79 aa). Residue Ser1018 is modified to Phosphoserine.

This sequence belongs to the ELAPOR family.

The protein localises to the cell membrane. Functions as a regulator of the BMP signaling pathway and may be involved in epidermal differentiation. This Homo sapiens (Human) protein is Endosome/lysosome-associated apoptosis and autophagy regulator family member 2.